We begin with the raw amino-acid sequence, 226 residues long: Glutathione peroxidase 3 (226 aa).

The signal sequence occupies residues 1 to 24 (MARLLQASCLLSLLLAGFVPQSRG). U73 is a catalytic residue. Position 73 (U73) is a non-standard amino acid, selenocysteine.

This sequence belongs to the glutathione peroxidase family. Homotetramer. As to expression, secreted in plasma.

Its subcellular location is the secreted. It carries out the reaction 2 glutathione + H2O2 = glutathione disulfide + 2 H2O. It catalyses the reaction tert-butyl hydroperoxide + 2 glutathione = tert-butanol + glutathione disulfide + H2O. Functionally, protects cells and enzymes from oxidative damage, by catalyzing the reduction of hydrogen peroxide, lipid peroxides and organic hydroperoxide, by glutathione. The sequence is that of Glutathione peroxidase 3 from Hylobates lar (Lar gibbon).